A 356-amino-acid polypeptide reads, in one-letter code: UDP-3-O-acylglucosamine N-acyltransferase (356 aa).

Residue His-242 is the Proton acceptor of the active site.

It belongs to the transferase hexapeptide repeat family. LpxD subfamily. As to quaternary structure, homotrimer.

The catalysed reaction is a UDP-3-O-[(3R)-3-hydroxyacyl]-alpha-D-glucosamine + a (3R)-hydroxyacyl-[ACP] = a UDP-2-N,3-O-bis[(3R)-3-hydroxyacyl]-alpha-D-glucosamine + holo-[ACP] + H(+). The protein operates within bacterial outer membrane biogenesis; LPS lipid A biosynthesis. Functionally, catalyzes the N-acylation of UDP-3-O-acylglucosamine using 3-hydroxyacyl-ACP as the acyl donor. Is involved in the biosynthesis of lipid A, a phosphorylated glycolipid that anchors the lipopolysaccharide to the outer membrane of the cell. The protein is UDP-3-O-acylglucosamine N-acyltransferase of Acinetobacter baylyi (strain ATCC 33305 / BD413 / ADP1).